The chain runs to 311 residues: Mediator of RNA polymerase II transcription subunit 27 (311 aa).

Belongs to the Mediator complex subunit 27 family. In terms of assembly, component of the Mediator complex.

Its subcellular location is the nucleus. Functionally, component of the Mediator complex, a coactivator involved in the regulated transcription of nearly all RNA polymerase II-dependent genes. Mediator functions as a bridge to convey information from gene-specific regulatory proteins to the basal RNA polymerase II transcription machinery. Mediator is recruited to promoters by direct interactions with regulatory proteins and serves as a scaffold for the assembly of a functional preinitiation complex with RNA polymerase II and the general transcription factors. The chain is Mediator of RNA polymerase II transcription subunit 27 (med27) from Xenopus tropicalis (Western clawed frog).